Here is a 474-residue protein sequence, read N- to C-terminus: tRNA modification GTPase MnmE (474 aa).

3 residues coordinate (6S)-5-formyl-5,6,7,8-tetrahydrofolate: Arg28, Glu92, and Arg131. The TrmE-type G domain maps to 227–395 (GIPVAIVGTT…LKGELTQIME (169 aa)). Residue Asn237 coordinates K(+). Residues 237-242 (NVGKST), 256-262 (SDIHGTT), 281-284 (DTAG), and 376-378 (SAR) contribute to the GTP site. Ser241 contributes to the Mg(2+) binding site. Positions 256, 258, and 261 each coordinate K(+). Thr262 lines the Mg(2+) pocket. Position 474 (Lys474) interacts with (6S)-5-formyl-5,6,7,8-tetrahydrofolate.

It belongs to the TRAFAC class TrmE-Era-EngA-EngB-Septin-like GTPase superfamily. TrmE GTPase family. As to quaternary structure, homodimer. Heterotetramer of two MnmE and two MnmG subunits. K(+) is required as a cofactor.

The protein localises to the cytoplasm. Exhibits a very high intrinsic GTPase hydrolysis rate. Involved in the addition of a carboxymethylaminomethyl (cmnm) group at the wobble position (U34) of certain tRNAs, forming tRNA-cmnm(5)s(2)U34. The polypeptide is tRNA modification GTPase MnmE (Porphyromonas gingivalis (strain ATCC BAA-308 / W83)).